An 87-amino-acid polypeptide reads, in one-letter code: HssA/B-like protein 55 (87 aa).

A compositionally biased stretch (polar residues) spans 1-13 (MTILSAITSISRP). Residues 1–31 (MTILSAITSISRPNKSSKSVVSSNGGSSLSM) are disordered. A compositionally biased stretch (low complexity) spans 14–31 (NKSSKSVVSSNGGSSLSM).

The protein belongs to the hssA/B family.

This chain is HssA/B-like protein 55 (hssl55), found in Dictyostelium discoideum (Social amoeba).